The primary structure comprises 423 residues: Innexin eat-5 (423 aa).

The next 4 helical transmembrane spans lie at 25-41 (YYYSTLIIMGMSLTITA), 102-122 (PFIMAIEAAFFYLPVIFWSML), 277-297 (IFLFLYIWFLLVFFVTLFDSI), and 341-361 (HSILLSEFCLHKFTPDIIILL).

It belongs to the pannexin family. As to quaternary structure, heterooligomer of eat-5 and another innexin. Expressed in pharyngeal muscles.

The protein resides in the cell membrane. It localises to the cell junction. Its subcellular location is the gap junction. Structural component of the gap junctions. Required for synchronized pharyngeal muscle contractions. This Caenorhabditis elegans protein is Innexin eat-5 (eat-5).